A 95-amino-acid polypeptide reads, in one-letter code: Small ribosomal subunit protein bS6 (95 aa).

It belongs to the bacterial ribosomal protein bS6 family.

Binds together with bS18 to 16S ribosomal RNA. This Halalkalibacterium halodurans (strain ATCC BAA-125 / DSM 18197 / FERM 7344 / JCM 9153 / C-125) (Bacillus halodurans) protein is Small ribosomal subunit protein bS6 (rpsF).